A 279-amino-acid polypeptide reads, in one-letter code: UPF0173 metal-dependent hydrolase MXAN_1394 (279 aa).

The protein belongs to the UPF0173 family.

The sequence is that of UPF0173 metal-dependent hydrolase MXAN_1394 from Myxococcus xanthus (strain DK1622).